A 238-amino-acid polypeptide reads, in one-letter code: Purine nucleoside phosphorylase DeoD-type (238 aa).

H4 serves as a coordination point for a purine D-ribonucleoside. Residues G20, R24, R43, and 87 to 90 each bind phosphate; that span reads RIGS. A purine D-ribonucleoside is bound by residues 181–183 and 205–206; these read EME and SD. D206 acts as the Proton donor in catalysis.

This sequence belongs to the PNP/UDP phosphorylase family. As to quaternary structure, homohexamer; trimer of homodimers.

The enzyme catalyses a purine D-ribonucleoside + phosphate = a purine nucleobase + alpha-D-ribose 1-phosphate. It carries out the reaction a purine 2'-deoxy-D-ribonucleoside + phosphate = a purine nucleobase + 2-deoxy-alpha-D-ribose 1-phosphate. Functionally, catalyzes the reversible phosphorolytic breakdown of the N-glycosidic bond in the beta-(deoxy)ribonucleoside molecules, with the formation of the corresponding free purine bases and pentose-1-phosphate. This chain is Purine nucleoside phosphorylase DeoD-type, found in Mycoplasma pneumoniae (strain ATCC 29342 / M129 / Subtype 1) (Mycoplasmoides pneumoniae).